We begin with the raw amino-acid sequence, 340 residues long: S-adenosylmethionine:tRNA ribosyltransferase-isomerase (340 aa).

The protein belongs to the QueA family. As to quaternary structure, monomer.

The protein localises to the cytoplasm. It carries out the reaction 7-aminomethyl-7-carbaguanosine(34) in tRNA + S-adenosyl-L-methionine = epoxyqueuosine(34) in tRNA + adenine + L-methionine + 2 H(+). Its pathway is tRNA modification; tRNA-queuosine biosynthesis. Functionally, transfers and isomerizes the ribose moiety from AdoMet to the 7-aminomethyl group of 7-deazaguanine (preQ1-tRNA) to give epoxyqueuosine (oQ-tRNA). The protein is S-adenosylmethionine:tRNA ribosyltransferase-isomerase of Campylobacter concisus (strain 13826).